We begin with the raw amino-acid sequence, 785 residues long: MEKKVEAILEFDKIKKQLTEFASSSLGEQAILELAPATNFQVVQKSQLETEEGAKIIRLRGSAPITGLTDVFAHLKRLEIGGDLNGLEIYQIGSNLRVSRQMKNFMTDLLEMGVELPLLGALSDELLVLKEVEEDIAISVDESGKILDTASEALSTIRRTLRRTEDRVREKLESYLRDRNASKMLSDAVITIRNDRYVIPVKQEYKGHYGGIVHDQSASGQTLFIEPQSVVDLNNERKALQAKEKQEIERILAEISASLAGWINEIHHNTFILGRYDFIFAKARFGKAMKAVTPHLSDAGIVHLIAARHPLLDAANVVANDIYLGEDFTTIVITGPNTGGKTITLKTLGLLTLMAQSGLQIPAQEDSTIAVFEHVFADIGDEQSIEQSLSTFSSHMTNIVSILEKVNHKSLILYDELGAGTDPQEGAALAIAILDASHEKGASVVATTHYPELKAYGYNRVHATNASVEFNVETLSPTYKLLIGVPGRSNAFDISRRLGLSENIITEARSLVDTESADLNDMISSLEEKRNLAETEYEEARELARGADALLKDLQKEITNYYQQKDKLMEQAREKAANIVTKAEVEAEEIIHELRTMQLNGAAGIKEHELIDAKTRLGKAKPKTINKTIPQAPKQKPHVFQVGDNVRVLSLGQKGTLLNKISDKEWNVQIGIIKMKIKTTDLEYIQPETPKKQRIITSVHSSDSPVKSELDLRGERYEDALQKVDKYLDEALLAGYPQVAIIHGKGTGALRTGVTEYLKNHRMVKSIRFGAAAEGGNGVTIVEFK.

Residue 335–342 (GPNTGGKT) coordinates ATP. Residues 710–785 (LDLRGERYED…GNGVTIVEFK (76 aa)) enclose the Smr domain.

Belongs to the DNA mismatch repair MutS family. MutS2 subfamily. Homodimer. Binds to stalled ribosomes, contacting rRNA.

Its function is as follows. Endonuclease that is involved in the suppression of homologous recombination and thus may have a key role in the control of bacterial genetic diversity. Functionally, acts as a ribosome collision sensor, splitting the ribosome into its 2 subunits. Detects stalled/collided 70S ribosomes which it binds and splits by an ATP-hydrolysis driven conformational change. Acts upstream of the ribosome quality control system (RQC), a ribosome-associated complex that mediates the extraction of incompletely synthesized nascent chains from stalled ribosomes and their subsequent degradation. Probably generates substrates for RQC. The polypeptide is Endonuclease MutS2 (Listeria welshimeri serovar 6b (strain ATCC 35897 / DSM 20650 / CCUG 15529 / CIP 8149 / NCTC 11857 / SLCC 5334 / V8)).